Consider the following 169-residue polypeptide: Probable calcium-binding protein CML20 (169 aa).

The segment at 1-23 (MSSIYRTVSRKEKPRRHHGLTTQ) is disordered. EF-hand domains are found at residues 23 to 58 (QKKQEIKEAFELFDTDGSGTIDAKELNVAMRALGFE), 59 to 94 (MTEEQINKMIADVDKDGSGAIDFDEFVHMMTAKIGE), 96 to 131 (DTKEELTKAFQIIDLDKNGKISPDDIKRMAKDLGEN), and 132 to 167 (FTDAEIREMVEEADRDRDGEVNMDEFMRMMRRTAYG). Asp-36, Asp-38, Ser-40, Thr-42, Glu-47, Asp-72, Asp-74, Ser-76, Glu-83, Asp-109, Asp-111, Asn-113, Lys-115, Asp-120, Asp-145, Asp-147, Asp-149, Glu-151, and Glu-156 together coordinate Ca(2+).

Interacts with TON1A and TON1B. Interacts with SAC3A and SAC3B. Interacts with UCH1 and UCH2.

Potential calcium sensor. This Arabidopsis thaliana (Mouse-ear cress) protein is Probable calcium-binding protein CML20.